A 232-amino-acid polypeptide reads, in one-letter code: Zinc import ATP-binding protein ZnuC (232 aa).

The 216-residue stretch at 5 to 220 folds into the ABC transporter domain; that stretch reads VNLKNIFVFY…PSFIEMFGCY (216 aa). 37-44 provides a ligand contact to ATP; the sequence is GPNGSGKS.

The protein belongs to the ABC transporter superfamily. Zinc importer (TC 3.A.1.15.5) family. The complex is composed of two ATP-binding proteins (ZnuC), two transmembrane proteins (ZnuB) and a solute-binding protein (ZnuA).

It localises to the cell membrane. It carries out the reaction Zn(2+)(out) + ATP(in) + H2O(in) = Zn(2+)(in) + ADP(in) + phosphate(in) + H(+)(in). Part of the ABC transporter complex ZnuABC involved in zinc import. Responsible for energy coupling to the transport system. The polypeptide is Zinc import ATP-binding protein ZnuC (Wigglesworthia glossinidia brevipalpis).